A 198-amino-acid polypeptide reads, in one-letter code: FMN-dependent NADH:quinone oxidoreductase (198 aa).

FMN is bound by residues 92–95 and 136–139; these read MWNL and SRGG.

This sequence belongs to the azoreductase type 1 family. As to quaternary structure, homodimer. FMN is required as a cofactor.

The enzyme catalyses 2 a quinone + NADH + H(+) = 2 a 1,4-benzosemiquinone + NAD(+). It catalyses the reaction N,N-dimethyl-1,4-phenylenediamine + anthranilate + 2 NAD(+) = 2-(4-dimethylaminophenyl)diazenylbenzoate + 2 NADH + 2 H(+). Its function is as follows. Quinone reductase that provides resistance to thiol-specific stress caused by electrophilic quinones. Functionally, also exhibits azoreductase activity. Catalyzes the reductive cleavage of the azo bond in aromatic azo compounds to the corresponding amines. The protein is FMN-dependent NADH:quinone oxidoreductase of Clostridium perfringens (strain SM101 / Type A).